A 105-amino-acid chain; its full sequence is Large ribosomal subunit protein eL36 (105 aa).

The interval 1–36 is disordered; it reads MAQERSGIAVGLNKGHKTTPLNTPKTRISRSKGKAS. Over residues 27–36 the composition is skewed to basic residues; sequence RISRSKGKAS.

It belongs to the eukaryotic ribosomal protein eL36 family. As to quaternary structure, component of the large ribosomal subunit (LSU).

The protein localises to the cytoplasm. Component of the ribosome, a large ribonucleoprotein complex responsible for the synthesis of proteins in the cell. The small ribosomal subunit (SSU) binds messenger RNAs (mRNAs) and translates the encoded message by selecting cognate aminoacyl-transfer RNA (tRNA) molecules. The large subunit (LSU) contains the ribosomal catalytic site termed the peptidyl transferase center (PTC), which catalyzes the formation of peptide bonds, thereby polymerizing the amino acids delivered by tRNAs into a polypeptide chain. The nascent polypeptides leave the ribosome through a tunnel in the LSU and interact with protein factors that function in enzymatic processing, targeting, and the membrane insertion of nascent chains at the exit of the ribosomal tunnel. The polypeptide is Large ribosomal subunit protein eL36 (Emericella nidulans (strain FGSC A4 / ATCC 38163 / CBS 112.46 / NRRL 194 / M139) (Aspergillus nidulans)).